The sequence spans 338 residues: Ketol-acid reductoisomerase (NADP(+)) (338 aa).

The region spanning 1-181 is the KARI N-terminal Rossmann domain; that stretch reads MKVYYDKDAD…GGTRGGVIET (181 aa). NADP(+) is bound by residues 24–27, Arg-47, and Ser-52; that span reads YGSQ. Residue His-107 is part of the active site. Gly-133 is a binding site for NADP(+). One can recognise a KARI C-terminal knotted domain in the interval 182 to 327; it reads TFKEETETDL…SRLRDMMPWI (146 aa). Mg(2+) is bound by residues Asp-190, Glu-194, Glu-226, and Glu-230. Ser-251 is a substrate binding site.

Belongs to the ketol-acid reductoisomerase family. Mg(2+) is required as a cofactor.

The enzyme catalyses (2R)-2,3-dihydroxy-3-methylbutanoate + NADP(+) = (2S)-2-acetolactate + NADPH + H(+). The catalysed reaction is (2R,3R)-2,3-dihydroxy-3-methylpentanoate + NADP(+) = (S)-2-ethyl-2-hydroxy-3-oxobutanoate + NADPH + H(+). It functions in the pathway amino-acid biosynthesis; L-isoleucine biosynthesis; L-isoleucine from 2-oxobutanoate: step 2/4. Its pathway is amino-acid biosynthesis; L-valine biosynthesis; L-valine from pyruvate: step 2/4. Involved in the biosynthesis of branched-chain amino acids (BCAA). Catalyzes an alkyl-migration followed by a ketol-acid reduction of (S)-2-acetolactate (S2AL) to yield (R)-2,3-dihydroxy-isovalerate. In the isomerase reaction, S2AL is rearranged via a Mg-dependent methyl migration to produce 3-hydroxy-3-methyl-2-ketobutyrate (HMKB). In the reductase reaction, this 2-ketoacid undergoes a metal-dependent reduction by NADPH to yield (R)-2,3-dihydroxy-isovalerate. This is Ketol-acid reductoisomerase (NADP(+)) from Nitrosomonas eutropha (strain DSM 101675 / C91 / Nm57).